The following is a 95-amino-acid chain: Large ribosomal subunit protein bL25 (95 aa).

Positions 1-20 (MSFKFNAEVRSKQGKGASRR) are disordered.

It belongs to the bacterial ribosomal protein bL25 family. Part of the 50S ribosomal subunit; part of the 5S rRNA/L5/L18/L25 subcomplex. Contacts the 5S rRNA. Binds to the 5S rRNA independently of L5 and L18.

This is one of the proteins that binds to the 5S RNA in the ribosome where it forms part of the central protuberance. This chain is Large ribosomal subunit protein bL25, found in Histophilus somni (strain 129Pt) (Haemophilus somnus).